Here is a 184-residue protein sequence, read N- to C-terminus: Thiosulfate dehydrogenase [quinone] large subunit (184 aa).

4 helical membrane passes run 21 to 38 (LFPV…GGLR), 86 to 106 (FLTV…IGLL), 109 to 129 (LAAL…WLGS), and 137 to 157 (IGAL…GRVW).

As to quaternary structure, heterodimer of a large and a small subunit in a 2:2 stoichiometry. TQO may associate with the terminal oxidase formed by doxBCE.

It localises to the cell membrane. The enzyme catalyses 6-decylubiquinone + 2 thiosulfate = 6-decylubiquinol + tetrathionate. Inhibited by sulfite, metabisulfite and dithonite. In terms of biological role, TQO plays a role in sulfur oxidation and is proposed to couple sulfur oxidation to dioxygen reduction; caldariellaquinone or sulfolobus quinone seem to serve to transfer electrons to the electron transport chain terminal oxidase formed by DoxBCE. The polypeptide is Thiosulfate dehydrogenase [quinone] large subunit (doxD) (Acidianus ambivalens (Desulfurolobus ambivalens)).